The sequence spans 459 residues: Argininosuccinate lyase (459 aa).

It belongs to the lyase 1 family. Argininosuccinate lyase subfamily.

It is found in the cytoplasm. The catalysed reaction is 2-(N(omega)-L-arginino)succinate = fumarate + L-arginine. Its pathway is amino-acid biosynthesis; L-arginine biosynthesis; L-arginine from L-ornithine and carbamoyl phosphate: step 3/3. The chain is Argininosuccinate lyase from Photorhabdus laumondii subsp. laumondii (strain DSM 15139 / CIP 105565 / TT01) (Photorhabdus luminescens subsp. laumondii).